Reading from the N-terminus, the 429-residue chain is Histidine--tRNA ligase (429 aa).

Belongs to the class-II aminoacyl-tRNA synthetase family. Homodimer.

The protein resides in the cytoplasm. The enzyme catalyses tRNA(His) + L-histidine + ATP = L-histidyl-tRNA(His) + AMP + diphosphate + H(+). The sequence is that of Histidine--tRNA ligase from Streptococcus pneumoniae serotype 2 (strain D39 / NCTC 7466).